The chain runs to 115 residues: Probable non-functional T cell receptor beta variable 23-1 (115 aa).

The N-terminal stretch at 1–21 (MGTRLLGCAALCLLAADSFHA) is a signal peptide. The Ig-like domain occupies 22–115 (KVTQTPGHLV…TALYLCASSQ (94 aa)). Cysteines 42 and 111 form a disulfide.

As to quaternary structure, alpha-beta TR is a heterodimer composed of an alpha and beta chain; disulfide-linked. The alpha-beta TR is associated with the transmembrane signaling CD3 coreceptor proteins to form the TR-CD3 (TcR or TCR). The assembly of alpha-beta TR heterodimers with CD3 occurs in the endoplasmic reticulum where a single alpha-beta TR heterodimer associates with one CD3D-CD3E heterodimer, one CD3G-CD3E heterodimer and one CD247 homodimer forming a stable octameric structure. CD3D-CD3E and CD3G-CD3E heterodimers preferentially associate with TR alpha and TR beta chains, respectively. The association of the CD247 homodimer is the last step of TcR assembly in the endoplasmic reticulum and is required for transport to the cell surface.

It is found in the cell membrane. Functionally, probable non-functional open reading frame (ORF) of V region of the variable domain of T cell receptor (TR) beta chain. Non-functional ORF generally cannot participate in the synthesis of a productive T cell receptor (TR) chain due to altered V-(D)-J or switch recombination and/or splicing site (at mRNA level) and/or conserved amino acid change (protein level). Alpha-beta T cell receptors are antigen specific receptors which are essential to the immune response and are present on the cell surface of T lymphocytes. Recognize peptide-major histocompatibility (MH) (pMH) complexes that are displayed by antigen presenting cells (APC), a prerequisite for efficient T cell adaptive immunity against pathogens. Binding of alpha-beta TR to pMH complex initiates TR-CD3 clustering on the cell surface and intracellular activation of LCK that phosphorylates the ITAM motifs of CD3G, CD3D, CD3E and CD247 enabling the recruitment of ZAP70. In turn ZAP70 phosphorylates LAT, which recruits numerous signaling molecules to form the LAT signalosome. The LAT signalosome propagates signal branching to three major signaling pathways, the calcium, the mitogen-activated protein kinase (MAPK) kinase and the nuclear factor NF-kappa-B (NF-kB) pathways, leading to the mobilization of transcription factors that are critical for gene expression and essential for T cell growth and differentiation. The T cell repertoire is generated in the thymus, by V-(D)-J rearrangement. This repertoire is then shaped by intrathymic selection events to generate a peripheral T cell pool of self-MH restricted, non-autoaggressive T cells. Post-thymic interaction of alpha-beta TR with the pMH complexes shapes TR structural and functional avidity. This Homo sapiens (Human) protein is Probable non-functional T cell receptor beta variable 23-1.